Consider the following 152-residue polypeptide: Ribosome maturation factor RimP (152 aa).

This sequence belongs to the RimP family.

The protein localises to the cytoplasm. Required for maturation of 30S ribosomal subunits. This is Ribosome maturation factor RimP from Shigella boydii serotype 4 (strain Sb227).